Consider the following 142-residue polypeptide: Large ribosomal subunit protein uL13 (142 aa).

The protein belongs to the universal ribosomal protein uL13 family. In terms of assembly, part of the 50S ribosomal subunit.

In terms of biological role, this protein is one of the early assembly proteins of the 50S ribosomal subunit, although it is not seen to bind rRNA by itself. It is important during the early stages of 50S assembly. The sequence is that of Large ribosomal subunit protein uL13 from Buchnera aphidicola subsp. Cinara cedri (strain Cc).